The chain runs to 614 residues: Glucosidase 2 subunit beta (614 aa).

An N-terminal signal peptide occupies residues 1 to 19 (MGLHAILLLLLLRISASAA). Asn115 is a glycosylation site (N-linked (GlcNAc...) asparagine). Composition is skewed to basic and acidic residues over residues 194 to 222 (EEER…KKAS), 231 to 272 (QENH…HDPE), and 324 to 351 (TGEK…HSEE). Positions 194–396 (EEERLRKEKE…SHESDDEYVD (203 aa)) are disordered. Residues 352-364 (THEDESDVPESAE) are compositionally biased toward acidic residues. The span at 372-382 (SEVEDDRHKYD) shows a compositional bias: basic and acidic residues. The segment covering 383 to 396 (DEDFSHESDDEYVD) has biased composition (acidic residues). In terms of domain architecture, MRH spans 497–592 (DQCFESKEGK…VLSTPALCDE (96 aa)). 3 cysteine pairs are disulfide-bonded: Cys499–Cys512, Cys549–Cys578, and Cys563–Cys590.

As to quaternary structure, heterodimer of a catalytic alpha subunit and a beta subunit.

Its subcellular location is the endoplasmic reticulum. It functions in the pathway glycan metabolism; N-glycan metabolism. Its function is as follows. Regulatory subunit of glucosidase II. May be required for defense response elicited by pathogen-associated molecular patterns (PAMPs). The chain is Glucosidase 2 subunit beta from Oryza sativa subsp. japonica (Rice).